Consider the following 253-residue polypeptide: uncharacterized protein (253 aa).

The next 6 membrane-spanning stretches (helical) occupy residues 17–37 (MWLL…HIIA), 46–66 (IFGF…VFVF), 93–113 (LAAS…YGIW), 139–159 (MYGL…WTVF), 172–192 (AMVL…SPLV), and 222–242 (IHLS…LLIM).

The protein localises to the cell membrane. This is an uncharacterized protein from Bacillus subtilis (strain 168).